The primary structure comprises 164 residues: uncharacterized protein (164 aa).

This is an uncharacterized protein from Methanocaldococcus jannaschii (strain ATCC 43067 / DSM 2661 / JAL-1 / JCM 10045 / NBRC 100440) (Methanococcus jannaschii).